Here is a 391-residue protein sequence, read N- to C-terminus: Beta sliding clamp (391 aa).

This sequence belongs to the beta sliding clamp family. As to quaternary structure, forms a ring-shaped head-to-tail homodimer around DNA which binds and tethers DNA polymerases and other proteins to the DNA. The DNA replisome complex has a single clamp-loading complex (3 tau and 1 each of delta, delta', psi and chi subunits) which binds 3 Pol III cores (1 core on the leading strand and 2 on the lagging strand) each with a beta sliding clamp dimer. Additional proteins in the replisome are other copies of gamma, psi and chi, Ssb, DNA helicase and RNA primase.

It is found in the cytoplasm. Its function is as follows. Confers DNA tethering and processivity to DNA polymerases and other proteins. Acts as a clamp, forming a ring around DNA (a reaction catalyzed by the clamp-loading complex) which diffuses in an ATP-independent manner freely and bidirectionally along dsDNA. Initially characterized for its ability to contact the catalytic subunit of DNA polymerase III (Pol III), a complex, multichain enzyme responsible for most of the replicative synthesis in bacteria; Pol III exhibits 3'-5' exonuclease proofreading activity. The beta chain is required for initiation of replication as well as for processivity of DNA replication. The polypeptide is Beta sliding clamp (dnaN) (Synechocystis sp. (strain ATCC 27184 / PCC 6803 / Kazusa)).